The following is a 354-amino-acid chain: Fructose-bisphosphate aldolase (354 aa).

Serine 50 contributes to the D-glyceraldehyde 3-phosphate binding site. The active-site Proton donor is the aspartate 83. Residues histidine 84, aspartate 105, glutamate 142, and histidine 198 each coordinate Zn(2+). Residue glycine 199 coordinates dihydroxyacetone phosphate. Histidine 232 contributes to the Zn(2+) binding site. Dihydroxyacetone phosphate is bound by residues 233–235 (GSS) and 275–278 (NIDT).

This sequence belongs to the class II fructose-bisphosphate aldolase family. Zn(2+) is required as a cofactor.

The enzyme catalyses beta-D-fructose 1,6-bisphosphate = D-glyceraldehyde 3-phosphate + dihydroxyacetone phosphate. The protein operates within carbohydrate degradation; glycolysis; D-glyceraldehyde 3-phosphate and glycerone phosphate from D-glucose: step 4/4. Functionally, catalyzes the aldol condensation of dihydroxyacetone phosphate (DHAP or glycerone-phosphate) with glyceraldehyde 3-phosphate (G3P) to form fructose 1,6-bisphosphate (FBP) in gluconeogenesis and the reverse reaction in glycolysis. This is Fructose-bisphosphate aldolase (fba) from Stutzerimonas stutzeri (Pseudomonas stutzeri).